Consider the following 251-residue polypeptide: uncharacterized protein (251 aa).

Residue 10 to 34 coordinates NADP(+); it reads ITGAGSGIGKKAAVMFAERGAKVAI. Residue Ser-139 coordinates substrate. The active-site Proton acceptor is the Tyr-152.

Belongs to the short-chain dehydrogenases/reductases (SDR) family.

This is an uncharacterized protein from Thermotoga maritima (strain ATCC 43589 / DSM 3109 / JCM 10099 / NBRC 100826 / MSB8).